Reading from the N-terminus, the 147-residue chain is Nucleoside diphosphate kinase (147 aa).

ATP-binding residues include Lys-9, Phe-57, Arg-85, Thr-91, Arg-102, and Asn-112. The active-site Pros-phosphohistidine intermediate is His-115.

The protein belongs to the NDK family. As to quaternary structure, homotetramer. Mg(2+) is required as a cofactor.

The protein resides in the cytoplasm. It carries out the reaction a 2'-deoxyribonucleoside 5'-diphosphate + ATP = a 2'-deoxyribonucleoside 5'-triphosphate + ADP. It catalyses the reaction a ribonucleoside 5'-diphosphate + ATP = a ribonucleoside 5'-triphosphate + ADP. Functionally, major role in the synthesis of nucleoside triphosphates other than ATP. The ATP gamma phosphate is transferred to the NDP beta phosphate via a ping-pong mechanism, using a phosphorylated active-site intermediate. The protein is Nucleoside diphosphate kinase of Listeria monocytogenes serotype 4b (strain CLIP80459).